The primary structure comprises 29 residues: FENKVPEKQKLFQEDNGIPVVLKGGVADA.

The residue at position 10 (K10) is an N6-acetyllysine.

The protein belongs to the cytochrome c oxidase VIIa family. In terms of assembly, component of the cytochrome c oxidase (complex IV, CIV), a multisubunit enzyme composed of 14 subunits. The complex is composed of a catalytic core of 3 subunits MT-CO1, MT-CO2 and MT-CO3, encoded in the mitochondrial DNA, and 11 supernumerary subunits COX4I, COX5A, COX5B, COX6A, COX6B, COX6C, COX7A, COX7B, COX7C, COX8 and NDUFA4, which are encoded in the nuclear genome. The complex exists as a monomer or a dimer and forms supercomplexes (SCs) in the inner mitochondrial membrane with NADH-ubiquinone oxidoreductase (complex I, CI) and ubiquinol-cytochrome c oxidoreductase (cytochrome b-c1 complex, complex III, CIII), resulting in different assemblies (supercomplex SCI(1)III(2)IV(1) and megacomplex MCI(2)III(2)IV(2)). Interacts with PET100.

Its subcellular location is the mitochondrion inner membrane. Its pathway is energy metabolism; oxidative phosphorylation. Its function is as follows. Component of the cytochrome c oxidase, the last enzyme in the mitochondrial electron transport chain which drives oxidative phosphorylation. The respiratory chain contains 3 multisubunit complexes succinate dehydrogenase (complex II, CII), ubiquinol-cytochrome c oxidoreductase (cytochrome b-c1 complex, complex III, CIII) and cytochrome c oxidase (complex IV, CIV), that cooperate to transfer electrons derived from NADH and succinate to molecular oxygen, creating an electrochemical gradient over the inner membrane that drives transmembrane transport and the ATP synthase. Cytochrome c oxidase is the component of the respiratory chain that catalyzes the reduction of oxygen to water. Electrons originating from reduced cytochrome c in the intermembrane space (IMS) are transferred via the dinuclear copper A center (CU(A)) of subunit 2 and heme A of subunit 1 to the active site in subunit 1, a binuclear center (BNC) formed by heme A3 and copper B (CU(B)). The BNC reduces molecular oxygen to 2 water molecules using 4 electrons from cytochrome c in the IMS and 4 protons from the mitochondrial matrix. The protein is Cytochrome c oxidase subunit 7A2, mitochondrial (COX7A2) of Canis lupus familiaris (Dog).